The primary structure comprises 150 residues: Cytochrome c-type biogenesis protein CcmE (150 aa).

The Cytoplasmic portion of the chain corresponds to 1–7; that stretch reads MTRKQKR. A helical; Signal-anchor for type II membrane protein membrane pass occupies residues 8–28; the sequence is LAIIGGGVGFLTAAVLLVMFA. Residues 29–150 lie on the Periplasmic side of the membrane; the sequence is FSQAVAYFYV…VTLGGEENIR (122 aa). Heme is bound by residues His123 and Tyr127.

Belongs to the CcmE/CycJ family.

The protein resides in the cell inner membrane. In terms of biological role, heme chaperone required for the biogenesis of c-type cytochromes. Transiently binds heme delivered by CcmC and transfers the heme to apo-cytochromes in a process facilitated by CcmF and CcmH. The protein is Cytochrome c-type biogenesis protein CcmE of Sinorhizobium medicae (strain WSM419) (Ensifer medicae).